Consider the following 938-residue polypeptide: Inner tegument protein (938 aa).

Positions 457 to 938 are interaction with large tegument protein; that stretch reads EIVDLLFSST…LVEPLLLKLG (482 aa).

Belongs to the herpesviridae inner tegument protein family. Interacts (via C-terminus) with the large tegument protein/LTP (via N-terminus).

Its subcellular location is the virion tegument. The protein localises to the host cytoplasm. It is found in the host nucleus. The protein resides in the host Golgi apparatus. It localises to the host trans-Golgi network. Plays an essential role in cytoplasmic secondary envelopment during viral egress. Interacts with the capsid via the large tegument protein/LTP and participates in its transport to the host trans-Golgi network (TGN) where secondary envelopment occurs. Modulates tegumentation and capsid accumulation at the viral assembly complex. The chain is Inner tegument protein (U30) from Human herpesvirus 7 (strain JI) (HHV-7).